The chain runs to 109 residues: Large ribosomal subunit protein uL24 (109 aa).

The protein belongs to the universal ribosomal protein uL24 family. In terms of assembly, part of the 50S ribosomal subunit.

Functionally, one of two assembly initiator proteins, it binds directly to the 5'-end of the 23S rRNA, where it nucleates assembly of the 50S subunit. One of the proteins that surrounds the polypeptide exit tunnel on the outside of the subunit. This Geotalea uraniireducens (strain Rf4) (Geobacter uraniireducens) protein is Large ribosomal subunit protein uL24.